Here is a 218-residue protein sequence, read N- to C-terminus: MMP 1-O-methyltransferase (218 aa).

Residues Phe-20, Gly-46, Ser-52, Asp-71, Gly-75, and Ser-124 each contribute to the S-adenosyl-L-methionine site. Asp-141 is a Mg(2+) binding site. His-144 (proton acceptor) is an active-site residue. Position 151 (Arg-151) interacts with S-adenosyl-L-methionine. Mg(2+)-binding residues include His-169 and Asp-170.

This sequence belongs to the methyltransferase superfamily. In terms of assembly, homodimer. The cofactor is Mg(2+).

It carries out the reaction 3,3'-di-O-methyl-4alpha-mannobiose + S-adenosyl-L-methionine = 1,3,3'-tri-O-methyl-4alpha-mannobiose + S-adenosyl-L-homocysteine + H(+). Inhibited by EDTA. Its function is as follows. Involved in the biosynthesis of 3-O-methylmannose polysaccharides (MMP), which are intracellular polymethylated polysaccharides implicated in the modulation of fatty acid metabolism in non-tuberculous mycobacteria. Specifically methylates the 1-OH position of 3,3'-di-O-methyl-4alpha-mannobiose, a probable early precursor of MMP, yielding the reducing end dimannoside of MMP. The chain is MMP 1-O-methyltransferase from Mycolicibacterium hassiacum (strain DSM 44199 / CIP 105218 / JCM 12690 / 3849) (Mycobacterium hassiacum).